Reading from the N-terminus, the 333-residue chain is DNA-directed RNA polymerase subunit alpha (333 aa).

The interval 1 to 233 (MVREKVRVST…DLFIPFLHAE (233 aa)) is alpha N-terminal domain (alpha-NTD). Residues 266 to 333 (KKEIAFKSIF…DILEIEKHFP (68 aa)) form an alpha C-terminal domain (alpha-CTD) region.

The protein belongs to the RNA polymerase alpha chain family. In plastids the minimal PEP RNA polymerase catalytic core is composed of four subunits: alpha, beta, beta', and beta''. When a (nuclear-encoded) sigma factor is associated with the core the holoenzyme is formed, which can initiate transcription.

It is found in the plastid. The protein resides in the chloroplast. It catalyses the reaction RNA(n) + a ribonucleoside 5'-triphosphate = RNA(n+1) + diphosphate. Functionally, DNA-dependent RNA polymerase catalyzes the transcription of DNA into RNA using the four ribonucleoside triphosphates as substrates. The protein is DNA-directed RNA polymerase subunit alpha of Lotus japonicus (Lotus corniculatus var. japonicus).